We begin with the raw amino-acid sequence, 548 residues long: Solute carrier family 22 member 7 (548 aa).

The next 12 helical transmembrane spans lie at 21-41, 146-166, 180-200, 204-224, 234-254, 259-279, 346-366, 376-397, 404-423, 432-452, 466-486, and 493-513; these read VALLALPRVLLPLHFLLPIFL, AASTFFFAGVLVGAVAFGYLS, VSTLVLGLASAASVSYVMFAI, LTGSALAGFTIIVMPLELEWL, VLSSTFWTGGMMLLALVGYLI, WLLLAVTLPCAPGILSLWWVP, ISLCCVVVWFGVNFSYYGLSL, YQTQLLFGAVELPSKLLVYLSV, LTQAGTLLGTALAFGTRLLV, TVLAVMGKAFSEAAFTTAYLF, MGLTALVGRLGGSLAPLAALL, and LPKLTYGGIALLAAGTALLLP. Residues 522–548 are disordered; the sequence is ETIQDVERKSAPTSLQEEEMPMKQVQN.

It belongs to the major facilitator (TC 2.A.1) superfamily. Organic cation transporter (TC 2.A.1.19) family.

It localises to the basolateral cell membrane. The protein resides in the apical cell membrane. Its subcellular location is the cell membrane. It catalyses the reaction orotate(out) + L-glutamate(in) = orotate(in) + L-glutamate(out). It carries out the reaction 3',5'-cyclic GMP(in) = 3',5'-cyclic GMP(out). The catalysed reaction is GMP(in) = GMP(out). The enzyme catalyses 2'-deoxyguanosine(in) = 2'-deoxyguanosine(out). It catalyses the reaction GDP(in) = GDP(out). It carries out the reaction guanosine(in) = guanosine(out). The catalysed reaction is GTP(in) = GTP(out). The enzyme catalyses 3',5'-cyclic AMP(in) = 3',5'-cyclic AMP(out). It catalyses the reaction creatinine(in) = creatinine(out). It carries out the reaction prostaglandin E2(out) = prostaglandin E2(in). The catalysed reaction is 2-oxoglutarate(in) = 2-oxoglutarate(out). The enzyme catalyses glutarate(in) = glutarate(out). It catalyses the reaction urate(out) = urate(in). It carries out the reaction estrone 3-sulfate(out) = estrone 3-sulfate(in). In terms of biological role, functions as a Na(+)-independent bidirectional multispecific transporter. Contributes to the renal and hepatic elimination of endogenous organic compounds from the systemic circulation into the urine and bile, respectively. Capable of transporting a wide range of purine and pyrimidine nucleobases, nucleosides and nucleotides, with cGMP, 2'deoxyguanosine and GMP being the preferred substrates. Functions as a pH- and chloride-independent cGMP bidirectional facilitative transporter that can regulate both intracellular and extracellular levels of cGMP and may be involved in cGMP signaling pathways. Mediates orotate/glutamate bidirectional exchange and most likely display a physiological role in hepatic release of glutamate into the blood. Involved in renal secretion and possible reabsorption of creatinine. Able to uptake prostaglandin E2 (PGE2) and may contribute to PGE2 renal excretion. Also transports alpha-ketoglutarate and urate. Apart from the orotate/glutamate exchange, the counterions for the uptake of other SLC22A7/OAT2 substrates remain to be identified. The sequence is that of Solute carrier family 22 member 7 (SLC22A7) from Pongo abelii (Sumatran orangutan).